Consider the following 277-residue polypeptide: Bis(5'-nucleosyl)-tetraphosphatase, symmetrical (277 aa).

Belongs to the Ap4A hydrolase family.

It carries out the reaction P(1),P(4)-bis(5'-adenosyl) tetraphosphate + H2O = 2 ADP + 2 H(+). Its function is as follows. Hydrolyzes diadenosine 5',5'''-P1,P4-tetraphosphate to yield ADP. The polypeptide is Bis(5'-nucleosyl)-tetraphosphatase, symmetrical (Bordetella bronchiseptica (strain ATCC BAA-588 / NCTC 13252 / RB50) (Alcaligenes bronchisepticus)).